Reading from the N-terminus, the 652-residue chain is Replication protein E1 (652 aa).

A Nuclear localization signal motif is present at residues 86–88 (KRK). Position 92 is a phosphoserine; by host (S92). Residues 153-173 (NNTNGEEEGENGGENGGSIRE) form a disordered region. A DNA-binding region region spans residues 188–354 (DPQSPTAQLK…LTVIQHGIDD (167 aa)). Residues 453–603 (VEFITFLCAF…FPFDQNRNPV (151 aa)) enclose the SF3 helicase domain. ATP is bound at residue 479 to 486 (GPPNTGKS). K560 is covalently cross-linked (Glycyl lysine isopeptide (Lys-Gly) (interchain with G-Cter in SUMO)).

Belongs to the papillomaviridae E1 protein family. Can form hexamers. Interacts with E2 protein; this interaction increases E1 DNA binding specificity. Interacts with host DNA polymerase subunit POLA2. Interacts with host single stranded DNA-binding protein RPA1. Interacts with host TOP1; this interaction stimulates the enzymatic activity of TOP1. In terms of processing, phosphorylated. Sumoylated.

It localises to the host nucleus. It catalyses the reaction Couples ATP hydrolysis with the unwinding of duplex DNA by translocating in the 3'-5' direction.. The catalysed reaction is ATP + H2O = ADP + phosphate + H(+). Functionally, ATP-dependent DNA 3'-5' helicase required for initiation of viral DNA replication. It forms a complex with the viral E2 protein. The E1-E2 complex binds to the replication origin which contains binding sites for both proteins. During the initial step, a dimer of E1 interacts with a dimer of protein E2 leading to a complex that binds the viral origin of replication with high specificity. Then, a second dimer of E1 displaces the E2 dimer in an ATP-dependent manner to form the E1 tetramer. Following this, two E1 monomers are added to each half of the site, which results in the formation of two E1 trimers on the viral ori. Subsequently, two hexamers will be created. The double hexamer acts as a bi-directional helicase machinery and unwinds the viral DNA and then recruits the host DNA polymerase to start replication. The protein is Replication protein E1 of Human papillomavirus type 70.